Consider the following 392-residue polypeptide: Succinate--CoA ligase [ADP-forming] subunit beta (392 aa).

The region spanning 9–247 (KAILRKYGVA…VTEEDPLEVE (239 aa)) is the ATP-grasp domain. ATP-binding positions include Lys49, 56-58 (GRG), Glu102, Leu105, and Glu110. Mg(2+)-binding residues include Asn202 and Asp216. Residues Asn267 and 324–326 (GIL) contribute to the substrate site.

The protein belongs to the succinate/malate CoA ligase beta subunit family. Heterotetramer of two alpha and two beta subunits. Mg(2+) serves as cofactor.

The catalysed reaction is succinate + ATP + CoA = succinyl-CoA + ADP + phosphate. The enzyme catalyses GTP + succinate + CoA = succinyl-CoA + GDP + phosphate. The protein operates within carbohydrate metabolism; tricarboxylic acid cycle; succinate from succinyl-CoA (ligase route): step 1/1. In terms of biological role, succinyl-CoA synthetase functions in the citric acid cycle (TCA), coupling the hydrolysis of succinyl-CoA to the synthesis of either ATP or GTP and thus represents the only step of substrate-level phosphorylation in the TCA. The beta subunit provides nucleotide specificity of the enzyme and binds the substrate succinate, while the binding sites for coenzyme A and phosphate are found in the alpha subunit. This is Succinate--CoA ligase [ADP-forming] subunit beta from Koribacter versatilis (strain Ellin345).